Here is a 141-residue protein sequence, read N- to C-terminus: Large ribosomal subunit protein uL11 (141 aa).

It belongs to the universal ribosomal protein uL11 family. Part of the ribosomal stalk of the 50S ribosomal subunit. Interacts with L10 and the large rRNA to form the base of the stalk. L10 forms an elongated spine to which L12 dimers bind in a sequential fashion forming a multimeric L10(L12)X complex. In terms of processing, one or more lysine residues are methylated.

Forms part of the ribosomal stalk which helps the ribosome interact with GTP-bound translation factors. The protein is Large ribosomal subunit protein uL11 of Amoebophilus asiaticus (strain 5a2).